A 572-amino-acid polypeptide reads, in one-letter code: Sulfite reductase [NADPH] hemoprotein beta-component (572 aa).

Residues Cys437, Cys443, Cys482, and Cys486 each coordinate [4Fe-4S] cluster. Residue Cys486 coordinates siroheme.

Belongs to the nitrite and sulfite reductase 4Fe-4S domain family. Alpha(8)-beta(8). The alpha component is a flavoprotein, the beta component is a hemoprotein. Siroheme is required as a cofactor. It depends on [4Fe-4S] cluster as a cofactor.

It carries out the reaction hydrogen sulfide + 3 NADP(+) + 3 H2O = sulfite + 3 NADPH + 4 H(+). The protein operates within sulfur metabolism; hydrogen sulfide biosynthesis; hydrogen sulfide from sulfite (NADPH route): step 1/1. Functionally, component of the sulfite reductase complex that catalyzes the 6-electron reduction of sulfite to sulfide. This is one of several activities required for the biosynthesis of L-cysteine from sulfate. This Staphylococcus epidermidis (strain ATCC 35984 / DSM 28319 / BCRC 17069 / CCUG 31568 / BM 3577 / RP62A) protein is Sulfite reductase [NADPH] hemoprotein beta-component.